The primary structure comprises 543 residues: Protein male-specific lethal-3 (543 aa).

Residues 10-90 form the Chromo domain; the sequence is LFNRGEKVLC…KLQRELAEAA (81 aa). The interval 93-247 is disordered; the sequence is QKTGGYSYKD…THTTDAEKRI (155 aa). Basic and acidic residues-rich tracts occupy residues 180–202, 210–224, and 234–247; these read RSRDGSGNRSRDGSGNRSRDNSS, KSKGGDKNDDGERRS, and SPKDTHTTDAEKRI. An MRG domain is found at 249 to 542; sequence QEDRVMLRIS…PLIDQGRELS (294 aa).

Component of the male-specific lethal (MSL) histone acetyltransferase complex, composed of mof, mle, msl-1, msl-2 and msl-3 proteins, as well as roX1 and roX2 non-coding RNAs. Post-translationally, ubiquitinated by msl-2.

Its subcellular location is the nucleus. The protein localises to the chromosome. Its function is as follows. Component of the male-specific lethal (MSL) histone acetyltransferase complex, a multiprotein complex essential for elevating transcription of the single X chromosome in the male (X chromosome dosage compensation). The MSL complex specifically associates with the single X chromosome in males and mediates formation of H4K16ac, promoting a two-fold activation of X chromosome. Acts as a histone reader that specifically recognizes and binds histone H3 trimethylated at 'Lys-36' (H3K36me3) and histone H4 monomethylated at 'Lys-20' (H4K20me1). Within the MSL complex, mediates the spreading of the MSL complex from initiation sites on the male X chromosome to flanking chromatin. Following initial recruitment of the MSL complex to male X chromosome by msl-2, msl-3 binds H3K36me3 and promotes spreading of the MSL complex in cis. In addition to its role in dosage compensation in males, promotes germline stem cell differentiation in females: recognizes and binds H3K36me3, promoting recruitment of the ATAC complex and transcription of genes, such as RpS19b. In Drosophila virilis (Fruit fly), this protein is Protein male-specific lethal-3 (msl-3).